The chain runs to 1867 residues: Probable serine/threonine-protein kinase roco8 (1867 aa).

A DEP 1 domain is found at 16-93 (SSDGLQIKDR…DDYIFYQFDN (78 aa)). Disordered stretches follow at residues 96–115 (NNNN…TTAT) and 121–225 (VSTK…NSFN). Residues 121-223 (VSTKIGSIGK…NSNSTYNSNS (103 aa)) are compositionally biased toward low complexity. The region spanning 264-342 (GDKGLKLQKK…NNNNGGGGVM (79 aa)) is the DEP 2 domain. LRR repeat units lie at residues 491–512 (RLDD…IINT), 515–536 (FLRI…ESIA), 540–561 (NLES…FSRL), 563–584 (LLTK…VFQL), 586–607 (NLEE…IGSL), 609–631 (SLEK…LGLL), 633–656 (RLKS…STLP), and 657–678 (LLEQ…ITSK). The Roc domain maps to 693–941 (GTETLSHIKL…NEIIQTLLNQ (249 aa)). Disordered regions lie at residues 763 to 813 (QNGI…KKRP) and 942 to 961 (SNNN…KQSN). Residues 768–793 (TSSSNLNLSTGTLPPPTQLSSSTSEL) show a composition bias toward low complexity. Positions 974-1111 (PSIYITLETN…ILYTLKNNSN (138 aa)) constitute a COR domain. The tract at residues 1163–1207 (SPSLSLSNSSQSVFTNPNNNNNNKSEQQQQQQQQQQQPQPISTSP) is disordered. In terms of domain architecture, Protein kinase spans 1456–1864 (LIYQEEIGVG…TLNEIKDSTI (409 aa)). ATP contacts are provided by residues 1462–1470 (IGVGGFSRV) and K1483. Residues 1509-1546 (SNSSLSISLSSSTSSLSPPIVNNNNNNNNLNNNLNNLN) are disordered. D1721 (proton acceptor) is an active-site residue.

This sequence belongs to the protein kinase superfamily. TKL Ser/Thr protein kinase family. ROCO subfamily.

It carries out the reaction L-seryl-[protein] + ATP = O-phospho-L-seryl-[protein] + ADP + H(+). The catalysed reaction is L-threonyl-[protein] + ATP = O-phospho-L-threonyl-[protein] + ADP + H(+). The protein is Probable serine/threonine-protein kinase roco8 (roco8) of Dictyostelium discoideum (Social amoeba).